A 472-amino-acid polypeptide reads, in one-letter code: Alanine--anticapsin ligase (472 aa).

Glutamate 109 contacts Mg(2+). ATP is bound by residues lysine 138 and lysine 178. The ATP-grasp domain maps to 142-355 (RAAFNRAGVK…MAQLLLDVLC (214 aa)). Leucine 182 serves as a coordination point for Mg(2+). Residues 184–185 (SS), 226–229 (EEFL), and glutamine 268 each bind ATP. Residues glutamate 273 and 309–311 (HTE) contribute to the substrate site. Residues glutamate 311 and glutamate 324 each contribute to the Mg(2+) site. 328-331 (RFAG) is a substrate binding site.

In terms of assembly, monomer or homodimer. Mg(2+) is required as a cofactor.

It catalyses the reaction L-anticapsin + L-alanine + ATP = bacilysin + ADP + phosphate + H(+). It participates in antibiotic biosynthesis; bacilysin biosynthesis. Part of the bacABCDEFG operon responsible for the biosynthesis of bacilysin, an irreversible inactivator of the glutaminase domain of glucosamine synthetase. Catalyzes the formation of alpha-dipeptides from various L-amino acids in the presence of ATP. In vivo catalyzes the ligation of L-alanine and L-anticapsin (epoxycyclohexanonyl-Ala) to produce the final bacilysin antibiotic (L-Ala-L-4S-cyclohexenonyl-Ala dipeptide). The polypeptide is Alanine--anticapsin ligase (Bacillus subtilis).